A 77-amino-acid chain; its full sequence is Translation initiation factor IF-1, chloroplastic (77 aa).

The S1-like domain occupies 1 to 72; sequence MNKQGLFQME…TKGRIVYRQR (72 aa).

It belongs to the IF-1 family. In terms of assembly, component of the 30S ribosomal translation pre-initiation complex which assembles on the 30S ribosome in the order IF-2 and IF-3, IF-1 and N-formylmethionyl-tRNA(fMet); mRNA recruitment can occur at any time during PIC assembly.

It is found in the plastid. It localises to the chloroplast. Its function is as follows. One of the essential components for the initiation of protein synthesis. Stabilizes the binding of IF-2 and IF-3 on the 30S subunit to which N-formylmethionyl-tRNA(fMet) subsequently binds. Helps modulate mRNA selection, yielding the 30S pre-initiation complex (PIC). Upon addition of the 50S ribosomal subunit IF-1, IF-2 and IF-3 are released leaving the mature 70S translation initiation complex. The sequence is that of Translation initiation factor IF-1, chloroplastic from Nephroselmis olivacea (Green alga).